Here is a 254-residue protein sequence, read N- to C-terminus: MRKPLVGINMKNYINTRAQTSEWLEATIPLLGNFSDVDTFIFPSMGTLETTANLLAGTSFGFGPQNMAPEKSGPLTGEFSVESIIDLSANYVEIGHAERKNLFHEKTSEIAKKIQLALDEKITPVVCVGEGIRANDTNELKNALKKQIEALFDTIQVTQFKNVVLAYEPEWAIGKANSADTDYIESAHQALREIIRELGGDETLVRIIYGGSVSKENAAEIVRQKNVDGLFVGRFGHKPQNFADIVSIVSKTKG.

Position 9–11 (9–11) interacts with substrate; it reads NMK. Catalysis depends on histidine 96, which acts as the Electrophile. The active-site Proton acceptor is the glutamate 168. Glycine 174 and serine 212 together coordinate substrate.

The protein belongs to the triosephosphate isomerase family. Homodimer.

It localises to the cytoplasm. It catalyses the reaction D-glyceraldehyde 3-phosphate = dihydroxyacetone phosphate. The protein operates within carbohydrate biosynthesis; gluconeogenesis. It functions in the pathway carbohydrate degradation; glycolysis; D-glyceraldehyde 3-phosphate from glycerone phosphate: step 1/1. In terms of biological role, involved in the gluconeogenesis. Catalyzes stereospecifically the conversion of dihydroxyacetone phosphate (DHAP) to D-glyceraldehyde-3-phosphate (G3P). The sequence is that of Probable triosephosphate isomerase 2 from Listeria monocytogenes serovar 1/2a (strain ATCC BAA-679 / EGD-e).